The primary structure comprises 224 residues: Cytidylate kinase (224 aa).

ATP is bound at residue 12–20 (GPSGAGKGT).

This sequence belongs to the cytidylate kinase family. Type 1 subfamily.

Its subcellular location is the cytoplasm. The catalysed reaction is CMP + ATP = CDP + ADP. It catalyses the reaction dCMP + ATP = dCDP + ADP. This chain is Cytidylate kinase, found in Aliivibrio salmonicida (strain LFI1238) (Vibrio salmonicida (strain LFI1238)).